The following is a 271-amino-acid chain: Acetyl-coenzyme A carboxylase carboxyl transferase subunit alpha (271 aa).

Positions 1–247 constitute a CoA carboxyltransferase C-terminal domain; it reads MSRELIRTAD…KKTILEALGE (247 aa).

Belongs to the AccA family. Acetyl-CoA carboxylase is a heterohexamer composed of biotin carboxyl carrier protein (AccB), biotin carboxylase (AccC) and two subunits each of ACCase subunit alpha (AccA) and ACCase subunit beta (AccD).

The protein localises to the cytoplasm. The catalysed reaction is N(6)-carboxybiotinyl-L-lysyl-[protein] + acetyl-CoA = N(6)-biotinyl-L-lysyl-[protein] + malonyl-CoA. It functions in the pathway lipid metabolism; malonyl-CoA biosynthesis; malonyl-CoA from acetyl-CoA: step 1/1. Component of the acetyl coenzyme A carboxylase (ACC) complex. First, biotin carboxylase catalyzes the carboxylation of biotin on its carrier protein (BCCP) and then the CO(2) group is transferred by the carboxyltransferase to acetyl-CoA to form malonyl-CoA. The polypeptide is Acetyl-coenzyme A carboxylase carboxyl transferase subunit alpha (Clostridium perfringens (strain ATCC 13124 / DSM 756 / JCM 1290 / NCIMB 6125 / NCTC 8237 / Type A)).